The following is a 775-amino-acid chain: Dipeptidyl peptidase 4 (775 aa).

An N-terminal signal peptide occupies residues 1-15 (MKLLSLLMLAGIAQA). N-linked (GlcNAc...) asparagine glycans are attached at residues Asn-81, Asn-111, Asn-170, and Asn-219. Residues Ser-613, Asp-690, and His-725 each act as charge relay system in the active site.

This sequence belongs to the peptidase S9B family.

It is found in the secreted. The enzyme catalyses Release of an N-terminal dipeptide, Xaa-Yaa-|-Zaa-, from a polypeptide, preferentially when Yaa is Pro, provided Zaa is neither Pro nor hydroxyproline.. Extracellular dipeptidyl-peptidase which removes N-terminal dipeptides sequentially from polypeptides having unsubstituted N-termini provided that the penultimate residue is proline. Contributes to pathogenicity. In Trichophyton tonsurans (Scalp ringworm fungus), this protein is Dipeptidyl peptidase 4 (DPP4).